We begin with the raw amino-acid sequence, 464 residues long: Methionine aminopeptidase 2-2 (464 aa).

The segment at 1–106 (MGAKTYEGGD…PRVPLSQLFP (106 aa)) is disordered. The segment covering 37–53 (EDGDGEFGSDDDDDGGD) has biased composition (acidic residues). Over residues 70–86 (PKKKKRSKKKKNNKKKS) the composition is skewed to basic residues. Histidine 216 contributes to the substrate binding site. A divalent metal cation contacts are provided by aspartate 237, aspartate 248, and histidine 317. Histidine 325 is a binding site for substrate. Positions 350 and 445 each coordinate a divalent metal cation.

It belongs to the peptidase M24A family. Methionine aminopeptidase eukaryotic type 2 subfamily. Requires Co(2+) as cofactor. Zn(2+) is required as a cofactor. Mn(2+) serves as cofactor. The cofactor is Fe(2+).

It is found in the cytoplasm. The catalysed reaction is Release of N-terminal amino acids, preferentially methionine, from peptides and arylamides.. Cotranslationally removes the N-terminal methionine from nascent proteins. The N-terminal methionine is often cleaved when the second residue in the primary sequence is small and uncharged (Met-Ala-, Cys, Gly, Pro, Ser, Thr, or Val). The sequence is that of Methionine aminopeptidase 2-2 from Talaromyces stipitatus (strain ATCC 10500 / CBS 375.48 / QM 6759 / NRRL 1006) (Penicillium stipitatum).